Reading from the N-terminus, the 455-residue chain is MDLPSHHSRLLRQLDEQRRRNLFCDCHIMIDGHTFRAHRNVLYASSGYFKMLLSQSSGNVGQPTTATFDVFSADTFTAILDFMYSGKLNLSGQNVIEIMSAASYLQMTEVIGVCKMFIKSSLDINEKDRDGFLDISDKETGQQTGQCGLYSTGWGMGRYHCNQPEGDIAAYLETSSCTPYGFCSRTDEHPSSQNSISTATMKMLDRHNRIPQIPSSTCSPEEHLRECRILESDDTGCHIEVELPQGEETEAFLNCQTVVQPRSRRRHSLNRATKADEVYAKIMGIKGCLGEDNLPSLHFKCPFCTHTVKRKADLKRHLLCHTGERPYPCQACGKRFTRLEHVRSHYRTIHEAGKPICRWCKRHVTEDSGQVVQEGTRRFRLCNKCVAEVGVGSFPNEVDDDEPTIILSGDEDKEPTWNFHDGIQTSDPEIIEDVSSDVVIHKVDDSDDEIKPIIC.

The BTB domain occupies Cys24 to Gly92. 2 C2H2-type zinc fingers span residues Phe299–His321 and Tyr327–His350.

It is found in the nucleus. Its function is as follows. May be involved in transcriptional regulation. The protein is Zinc finger and BTB domain-containing protein 8A.2 (zbtb8a.2) of Xenopus tropicalis (Western clawed frog).